We begin with the raw amino-acid sequence, 302 residues long: Sulfate adenylyltransferase subunit 2 (302 aa).

Belongs to the PAPS reductase family. CysD subfamily. As to quaternary structure, heterodimer composed of CysD, the smaller subunit, and CysN.

It carries out the reaction sulfate + ATP + H(+) = adenosine 5'-phosphosulfate + diphosphate. The protein operates within sulfur metabolism; hydrogen sulfide biosynthesis; sulfite from sulfate: step 1/3. Functionally, with CysN forms the ATP sulfurylase (ATPS) that catalyzes the adenylation of sulfate producing adenosine 5'-phosphosulfate (APS) and diphosphate, the first enzymatic step in sulfur assimilation pathway. APS synthesis involves the formation of a high-energy phosphoric-sulfuric acid anhydride bond driven by GTP hydrolysis by CysN coupled to ATP hydrolysis by CysD. The polypeptide is Sulfate adenylyltransferase subunit 2 (Klebsiella pneumoniae (strain 342)).